A 142-amino-acid polypeptide reads, in one-letter code: Large ribosomal subunit protein uL11 (142 aa).

This sequence belongs to the universal ribosomal protein uL11 family. In terms of assembly, part of the ribosomal stalk of the 50S ribosomal subunit. Interacts with L10 and the large rRNA to form the base of the stalk. L10 forms an elongated spine to which L12 dimers bind in a sequential fashion forming a multimeric L10(L12)X complex. In terms of processing, one or more lysine residues are methylated.

In terms of biological role, forms part of the ribosomal stalk which helps the ribosome interact with GTP-bound translation factors. In Gamma-proteobacterium EBAC31A08, this protein is Large ribosomal subunit protein uL11.